A 118-amino-acid polypeptide reads, in one-letter code: UPF0212 protein HQ_2663A (118 aa).

Belongs to the UPF0212 family.

This Haloquadratum walsbyi (strain DSM 16790 / HBSQ001) protein is UPF0212 protein HQ_2663A.